A 457-amino-acid polypeptide reads, in one-letter code: Bifunctional protein GlmU (457 aa).

The tract at residues Met1 to Arg230 is pyrophosphorylase. Residues Leu9–Gly12, Lys23, Gln73, and Gly78–Thr79 each bind UDP-N-acetyl-alpha-D-glucosamine. Asp103 provides a ligand contact to Mg(2+). 4 residues coordinate UDP-N-acetyl-alpha-D-glucosamine: Gly140, Glu155, Asn170, and Asn228. Asn228 is a Mg(2+) binding site. The interval Ile231–Asn251 is linker. The tract at residues Gly252–Lys457 is N-acetyltransferase. UDP-N-acetyl-alpha-D-glucosamine-binding residues include Arg333 and Lys351. The active-site Proton acceptor is the His363. Tyr366 and Asn377 together coordinate UDP-N-acetyl-alpha-D-glucosamine. Acetyl-CoA-binding positions include Asn386–Tyr387, Ala423, and Arg440.

It in the N-terminal section; belongs to the N-acetylglucosamine-1-phosphate uridyltransferase family. In the C-terminal section; belongs to the transferase hexapeptide repeat family. In terms of assembly, homotrimer. Mg(2+) serves as cofactor.

It localises to the cytoplasm. It carries out the reaction alpha-D-glucosamine 1-phosphate + acetyl-CoA = N-acetyl-alpha-D-glucosamine 1-phosphate + CoA + H(+). It catalyses the reaction N-acetyl-alpha-D-glucosamine 1-phosphate + UTP + H(+) = UDP-N-acetyl-alpha-D-glucosamine + diphosphate. It participates in nucleotide-sugar biosynthesis; UDP-N-acetyl-alpha-D-glucosamine biosynthesis; N-acetyl-alpha-D-glucosamine 1-phosphate from alpha-D-glucosamine 6-phosphate (route II): step 2/2. The protein operates within nucleotide-sugar biosynthesis; UDP-N-acetyl-alpha-D-glucosamine biosynthesis; UDP-N-acetyl-alpha-D-glucosamine from N-acetyl-alpha-D-glucosamine 1-phosphate: step 1/1. Its pathway is bacterial outer membrane biogenesis; LPS lipid A biosynthesis. In terms of biological role, catalyzes the last two sequential reactions in the de novo biosynthetic pathway for UDP-N-acetylglucosamine (UDP-GlcNAc). The C-terminal domain catalyzes the transfer of acetyl group from acetyl coenzyme A to glucosamine-1-phosphate (GlcN-1-P) to produce N-acetylglucosamine-1-phosphate (GlcNAc-1-P), which is converted into UDP-GlcNAc by the transfer of uridine 5-monophosphate (from uridine 5-triphosphate), a reaction catalyzed by the N-terminal domain. The protein is Bifunctional protein GlmU of Listeria welshimeri serovar 6b (strain ATCC 35897 / DSM 20650 / CCUG 15529 / CIP 8149 / NCTC 11857 / SLCC 5334 / V8).